A 340-amino-acid polypeptide reads, in one-letter code: GTP 3',8-cyclase (340 aa).

The region spanning R20–K246 is the Radical SAM core domain. R29 contributes to the GTP binding site. [4Fe-4S] cluster is bound by residues C36 and C40. Y42 is a binding site for S-adenosyl-L-methionine. Residue C43 coordinates [4Fe-4S] cluster. Residue R79 participates in GTP binding. S-adenosyl-L-methionine is bound at residue G83. Residue T110 participates in GTP binding. S134 is an S-adenosyl-L-methionine binding site. K171 serves as a coordination point for GTP. M205 provides a ligand contact to S-adenosyl-L-methionine. Positions 268 and 271 each coordinate [4Fe-4S] cluster. R273–R275 contacts GTP. C285 is a binding site for [4Fe-4S] cluster.

It belongs to the radical SAM superfamily. MoaA family. In terms of assembly, monomer and homodimer. The cofactor is [4Fe-4S] cluster.

The catalysed reaction is GTP + AH2 + S-adenosyl-L-methionine = (8S)-3',8-cyclo-7,8-dihydroguanosine 5'-triphosphate + 5'-deoxyadenosine + L-methionine + A + H(+). It functions in the pathway cofactor biosynthesis; molybdopterin biosynthesis. Its function is as follows. Catalyzes the cyclization of GTP to (8S)-3',8-cyclo-7,8-dihydroguanosine 5'-triphosphate. The protein is GTP 3',8-cyclase of Actinobacillus pleuropneumoniae serotype 3 (strain JL03).